The chain runs to 213 residues: ATP-dependent Clp protease proteolytic subunit (213 aa).

Ser-114 serves as the catalytic Nucleophile. The active site involves His-139.

Belongs to the peptidase S14 family. Fourteen ClpP subunits assemble into 2 heptameric rings which stack back to back to give a disk-like structure with a central cavity, resembling the structure of eukaryotic proteasomes.

It is found in the cytoplasm. The enzyme catalyses Hydrolysis of proteins to small peptides in the presence of ATP and magnesium. alpha-casein is the usual test substrate. In the absence of ATP, only oligopeptides shorter than five residues are hydrolyzed (such as succinyl-Leu-Tyr-|-NHMec, and Leu-Tyr-Leu-|-Tyr-Trp, in which cleavage of the -Tyr-|-Leu- and -Tyr-|-Trp bonds also occurs).. Its function is as follows. Cleaves peptides in various proteins in a process that requires ATP hydrolysis. Has a chymotrypsin-like activity. Plays a major role in the degradation of misfolded proteins. The chain is ATP-dependent Clp protease proteolytic subunit from Methylobacillus flagellatus (strain ATCC 51484 / DSM 6875 / VKM B-1610 / KT).